The primary structure comprises 196 residues: ATP-dependent Clp protease proteolytic subunit (196 aa).

S98 (nucleophile) is an active-site residue. The active site involves H123.

This sequence belongs to the peptidase S14 family. Fourteen ClpP subunits assemble into 2 heptameric rings which stack back to back to give a disk-like structure with a central cavity, resembling the structure of eukaryotic proteasomes.

The protein resides in the cytoplasm. The enzyme catalyses Hydrolysis of proteins to small peptides in the presence of ATP and magnesium. alpha-casein is the usual test substrate. In the absence of ATP, only oligopeptides shorter than five residues are hydrolyzed (such as succinyl-Leu-Tyr-|-NHMec, and Leu-Tyr-Leu-|-Tyr-Trp, in which cleavage of the -Tyr-|-Leu- and -Tyr-|-Trp bonds also occurs).. Its function is as follows. Cleaves peptides in various proteins in a process that requires ATP hydrolysis. Has a chymotrypsin-like activity. Plays a major role in the degradation of misfolded proteins. The sequence is that of ATP-dependent Clp protease proteolytic subunit from Geobacillus sp. (strain WCH70).